The following is a 186-amino-acid chain: MTYRCLLPMVLLLCFSTTALSRSYSLLRFQQRRSAEVCQKLLGQLHSTPQHCLEAKMDFQVPEEMNQAQQFRKEDAILVIYEMLQQIFNILTRDFSSTGWSETIIEDLLVELYGQMNRLQPIQKEIMQEQNFTMGDTTVLHLKKYYFNLVQYLESKEYNRCAWTVVRVQILTNFSFLMRLTASLRD.

The first 21 residues, 1 to 21, serve as a signal peptide directing secretion; sequence MTYRCLLPMVLLLCFSTTALS. The cysteines at positions 52 and 161 are disulfide-linked. N-linked (GlcNAc...) asparagine glycans are attached at residues Asn-131 and Asn-173.

This sequence belongs to the alpha/beta interferon family. Monomer.

Its subcellular location is the secreted. Its function is as follows. Has antiviral, antibacterial and anticancer activities. The sequence is that of Interferon beta-3 (IFNB3) from Bos taurus (Bovine).